The following is a 367-amino-acid chain: Chorismate synthase (367 aa).

Position 48 (arginine 48) interacts with NADP(+). Residues 125–127, glycine 283, 298–302, and arginine 324 contribute to the FMN site; these read RSS and KPTPS.

This sequence belongs to the chorismate synthase family. As to quaternary structure, homotetramer. It depends on FMNH2 as a cofactor.

It carries out the reaction 5-O-(1-carboxyvinyl)-3-phosphoshikimate = chorismate + phosphate. Its pathway is metabolic intermediate biosynthesis; chorismate biosynthesis; chorismate from D-erythrose 4-phosphate and phosphoenolpyruvate: step 7/7. Its function is as follows. Catalyzes the anti-1,4-elimination of the C-3 phosphate and the C-6 proR hydrogen from 5-enolpyruvylshikimate-3-phosphate (EPSP) to yield chorismate, which is the branch point compound that serves as the starting substrate for the three terminal pathways of aromatic amino acid biosynthesis. This reaction introduces a second double bond into the aromatic ring system. The polypeptide is Chorismate synthase (Agathobacter rectalis (strain ATCC 33656 / DSM 3377 / JCM 17463 / KCTC 5835 / VPI 0990) (Eubacterium rectale)).